A 182-amino-acid chain; its full sequence is RNA chaperone ProQ (182 aa).

The segment at 125–160 is disordered; that stretch reads EQRKEQRKDFFKKKAREERNAKTMNKAVKKGSPKKD.

Belongs to the ProQ family.

Its subcellular location is the cytoplasm. RNA chaperone with significant RNA binding, RNA strand exchange and RNA duplexing activities. This is RNA chaperone ProQ from Haemophilus ducreyi (strain 35000HP / ATCC 700724).